A 2114-amino-acid polypeptide reads, in one-letter code: Protein CELLULOSE SYNTHASE INTERACTIVE 2 (2114 aa).

ARM repeat units follow at residues 2-42, 46-87, 89-128, 135-177, 180-219, 222-262, 265-305, 354-394, 396-435, 479-519, 522-561, 563-595, 601-640, 643-682, 708-750, 774-816, 825-865, 870-910, 914-953, 994-1033, 1044-1083, 1087-1128, 1141-1182, 1185-1225, 1227-1264, 1265-1304, 1312-1353, 1355-1394, 1396-1435, 1454-1494, 1496-1525, 1526-1564, 1566-1605, 1606-1648, 1650-1689, 1690-1730, 1732-1771, 1772-1813, 1816-1855, 1857-1898, 1901-1940, and 1949-1993; these read TSEM…LLGL, KKEC…VLCK, KNVR…EVSL, NVGT…NLCG, DGFW…RLIR, TSSI…AITS, EEAI…SYGT, GDTR…SLFG, VDLS…NLCK, EESR…NLCC, EEIR…KLIK, ADPS…HVLA, EFVT…DLFS, KDLC…SLSN, AKTN…RVLR, SDVF…LLAK, HNPF…RFCK, LLGR…CAAK, TLWA…IQRP, PSNR…KWIA, PKVV…ALVR, DKTI…LVQN, ERVR…RIAD, DLSK…SLFR, PEIT…LCEL, FSSE…ALVK, RPDI…FLFT, EGLR…RLLD, KRFV…KMAK, ISQL…MVQP, LLIL…KPMV, LESL…SLLE, QRFQ…RSSV, TWPK…NILR, NPEH…ENQD, SSSV…RNPK, RETK…DISQ, HEGL…NFAM, RTSR…SLFS, HTLQ…TILT, PKLR…TLRQ, and TARS…CLPG. One can recognise a C2 domain in the interval 1974 to 2087; it reads SPAPSSFHER…LSEGSYSGIF (114 aa).

In terms of assembly, associates with cellulase synthase (CESA) complexes. Binds to cortical microtubules.

It is found in the cell membrane. Its subcellular location is the cytoplasm. It localises to the cytoskeleton. Regulator of the microtubular cytoskeleton. Microtubule-associated protein involved in the association of cellulase synthase (CESA) complexes (CSCs) and cortical microtubules. Promotes dynamics of CSCs in the plasma membrane. Regulates primary cell wall biosynthesis and cellulose microfibrils organization. The chain is Protein CELLULOSE SYNTHASE INTERACTIVE 2 from Arabidopsis thaliana (Mouse-ear cress).